The primary structure comprises 100 residues: Small ribosomal subunit protein uS14 (100 aa).

Belongs to the universal ribosomal protein uS14 family. Part of the 30S ribosomal subunit. Contacts proteins S3 and S10.

Functionally, binds 16S rRNA, required for the assembly of 30S particles and may also be responsible for determining the conformation of the 16S rRNA at the A site. The protein is Small ribosomal subunit protein uS14 of Prochlorococcus marinus (strain NATL2A).